The following is a 393-amino-acid chain: CCA-adding enzyme (393 aa).

ATP-binding residues include Gly-27 and Arg-30. CTP is bound by residues Gly-27 and Arg-30. Residues Asp-40 and Asp-42 each contribute to the Mg(2+) site. Residues Arg-111, Asp-154, Arg-157, Arg-160, and Arg-163 each contribute to the ATP site. CTP contacts are provided by Arg-111, Asp-154, Arg-157, Arg-160, and Arg-163.

The protein belongs to the tRNA nucleotidyltransferase/poly(A) polymerase family. Bacterial CCA-adding enzyme type 3 subfamily. Homodimer. Mg(2+) serves as cofactor.

It carries out the reaction a tRNA precursor + 2 CTP + ATP = a tRNA with a 3' CCA end + 3 diphosphate. The enzyme catalyses a tRNA with a 3' CCA end + 2 CTP + ATP = a tRNA with a 3' CCACCA end + 3 diphosphate. Functionally, catalyzes the addition and repair of the essential 3'-terminal CCA sequence in tRNAs without using a nucleic acid template. Adds these three nucleotides in the order of C, C, and A to the tRNA nucleotide-73, using CTP and ATP as substrates and producing inorganic pyrophosphate. tRNA 3'-terminal CCA addition is required both for tRNA processing and repair. Also involved in tRNA surveillance by mediating tandem CCA addition to generate a CCACCA at the 3' terminus of unstable tRNAs. While stable tRNAs receive only 3'-terminal CCA, unstable tRNAs are marked with CCACCA and rapidly degraded. This chain is CCA-adding enzyme, found in Listeria innocua serovar 6a (strain ATCC BAA-680 / CLIP 11262).